Reading from the N-terminus, the 362-residue chain is Transcription factor Sox-7 (362 aa).

Residues 19 to 41 are disordered; the sequence is MDGDLSDGLSPHRSPREKGSETR. A compositionally biased stretch (basic and acidic residues) spans 32–41; sequence SPREKGSETR. The HMG box DNA-binding region spans 42–110; the sequence is IRRPMNAFMV…QHMQDYPNYK (69 aa). The 117-residue stretch at 246–362 folds into the Sox C-terminal domain; the sequence is QPGSSMIPPV…ATYYNSYSVS (117 aa).

In terms of tissue distribution, localized to the vegetal hemisphere of blastula embryos. Tissue-specific expression in early neurula (stage 13-14) embryos begins in the ciliate cells of the epidermis. Starting about stage 24, expression is found in a lateral stripe on each side of the embryo, with expression extending more posteriorly as development proceeds. Expressed in embryonic vasculature, as well as in the procardia tube, endocardium, notochord and hindbrain. As development proceeds, strong expression is seen in the hindbrain, posterior cardinal veins, aortic arch, stomodeal depression, epithelium and intersomitic arteries of stage 33/34 larvae. Expressed in posterior rhombomeres. By stage 40 larvae, expression in most of the vascular endothelia disappears, in particular in the posterior cardinal vein, but expression continues in the hindbrain. Expressed in a wide range of adult tissues, including ovary, testis, kidney, bladder, duodenum and liver.

It is found in the nucleus. In terms of biological role, transcription factor. Binds to the DNA sequence 5'-AACAAT-3'. Acts downstream of vegt and upstream of nodal signaling to promote endodermal and mesodermal differentiation by promoting vegt-induced expression of both endodermal genes (including endodermin) and mesodermal genes (including snai1/snail and snai2/slug). Induces expression of multiple nodal genes (including nodal, nodal2, nodal4, nodal5 and nodal6) and binds directly to sites within the promoter of the nodal5 gene. The endodermal and mesodermal specification pathways then interact to initiate cardiogenesis. Acts partially redundantly with sox18 during cardiogenesis. Also acts as an antagonist of beta-catenin signaling. Regulates (possibly indirectly) development of the pronephros, the functional larval kidney. The sequence is that of Transcription factor Sox-7 (sox7) from Xenopus laevis (African clawed frog).